Reading from the N-terminus, the 229-residue chain is Clathrin light chain B (229 aa).

The segment covering 1 to 17 has biased composition (low complexity); it reads MADDFGFFSSSESGAPE. Residues 1 to 82 form a disordered region; that stretch reads MADDFGFFSS…NGDVFQEANG (82 aa). Residues Ser-11 and Ser-13 each carry the phosphoserine modification. The span at 58-73 shows a compositional bias: polar residues; sequence GPTSGAGSEDMGTTVN. An involved in binding clathrin heavy chain region spans residues 93 to 155; the sequence is ADRLTQEPES…QVEKNKINNR (63 aa). Thr-187 is subject to Phosphothreonine. Cysteines 199 and 209 form a disulfide. N6-acetyllysine is present on Lys-204. Phosphoserine is present on Ser-217.

This sequence belongs to the clathrin light chain family. In terms of assembly, clathrin coats are formed from molecules containing 3 heavy chains and 3 light chains. Interacts (via N-terminus) with HIP1. Interacts with HIP1R.

The protein localises to the cytoplasmic vesicle membrane. It is found in the membrane. It localises to the coated pit. Its function is as follows. Clathrin is the major protein of the polyhedral coat of coated pits and vesicles. The sequence is that of Clathrin light chain B (CLTB) from Homo sapiens (Human).